Here is a 342-residue protein sequence, read N- to C-terminus: Protease HtpX homolog (342 aa).

2 helical membrane passes run 6-26 (TAML…LIGG) and 28-48 (GGMM…YWNS). Residue histidine 130 participates in Zn(2+) binding. The active site involves glutamate 131. Histidine 134 is a Zn(2+) binding site. A run of 2 helical transmembrane segments spans residues 145–165 (ITAT…FFGG) and 173–193 (GGGI…AMLV). Glutamate 202 lines the Zn(2+) pocket. The interval 290 to 342 (PQHSKPAASGPWGSSAERSTDDPWGVKGGASTRSVPKIGRRGKDNDAPKGPWN) is disordered.

The protein belongs to the peptidase M48B family. Requires Zn(2+) as cofactor.

It localises to the cell inner membrane. This chain is Protease HtpX homolog, found in Allorhizobium ampelinum (strain ATCC BAA-846 / DSM 112012 / S4) (Agrobacterium vitis (strain S4)).